The sequence spans 258 residues: MMSPLVIKLGGVLLESDNAMMRLFKALLDYQKSNKRHILIIHGGGRLIDDLMNKLSLPIEKKNGLRITQSEHINVITGALAGTANKILLSWALKYKINAVGLCLADGKSVNVEKLDQDLGHVGKAKPGSPLFLTKLCEQGILPIISSIGITDDGLLMNVNADLAATALATTLKANLILLSDISSILDGKGQRISEINYLQAKKLISQGIITNGMIVKVNAALEAARVLQRSIDIASWQNTDQLKLLFNGINIGTRVLV.

Residues 44–45 (GG), Arg66, and Asn158 contribute to the substrate site. ATP is bound by residues 181–186 (DISSIL) and 209–211 (IIT).

This sequence belongs to the acetylglutamate kinase family. ArgB subfamily. Homodimer.

Its subcellular location is the cytoplasm. The enzyme catalyses N-acetyl-L-glutamate + ATP = N-acetyl-L-glutamyl 5-phosphate + ADP. It participates in amino-acid biosynthesis; L-arginine biosynthesis; N(2)-acetyl-L-ornithine from L-glutamate: step 2/4. In terms of biological role, catalyzes the ATP-dependent phosphorylation of N-acetyl-L-glutamate. This is Acetylglutamate kinase from Buchnera aphidicola subsp. Schizaphis graminum (strain Sg).